We begin with the raw amino-acid sequence, 70 residues long: MPKSAIHPDWYPNAKVYCDGQLVMKVGATKPTLNVDIWSGNHPFYTGSQTIIDTEGRVERFMRKYGMETQ.

Belongs to the bacterial ribosomal protein bL31 family. Type A subfamily. As to quaternary structure, part of the 50S ribosomal subunit.

Its subcellular location is the plastid. The protein localises to the chloroplast. In terms of biological role, binds the 23S rRNA. This Emiliania huxleyi (Coccolithophore) protein is Large ribosomal subunit protein bL31c.